A 134-amino-acid polypeptide reads, in one-letter code: Ribonuclease P protein component 2 (134 aa).

This sequence belongs to the eukaryotic/archaeal RNase P protein component 2 family. As to quaternary structure, consists of a catalytic RNA component and at least 4-5 protein subunits. Forms a subcomplex with Rnp3 which stimulates the catalytic RNA.

It is found in the cytoplasm. It catalyses the reaction Endonucleolytic cleavage of RNA, removing 5'-extranucleotides from tRNA precursor.. Part of ribonuclease P, a protein complex that generates mature tRNA molecules by cleaving their 5'-ends. In Methanocaldococcus jannaschii (strain ATCC 43067 / DSM 2661 / JAL-1 / JCM 10045 / NBRC 100440) (Methanococcus jannaschii), this protein is Ribonuclease P protein component 2.